Reading from the N-terminus, the 273-residue chain is Glutamate 5-kinase (273 aa).

Lys15 contributes to the ATP binding site. Residues Ser55, Asp142, and Asn158 each coordinate substrate. ATP is bound by residues 178 to 179 and 220 to 226; these read SD and TGGMLSK.

This sequence belongs to the glutamate 5-kinase family.

The protein resides in the cytoplasm. The enzyme catalyses L-glutamate + ATP = L-glutamyl 5-phosphate + ADP. Its pathway is amino-acid biosynthesis; L-proline biosynthesis; L-glutamate 5-semialdehyde from L-glutamate: step 1/2. Its function is as follows. Catalyzes the transfer of a phosphate group to glutamate to form L-glutamate 5-phosphate. This chain is Glutamate 5-kinase, found in Streptococcus pyogenes serotype M6 (strain ATCC BAA-946 / MGAS10394).